A 914-amino-acid polypeptide reads, in one-letter code: NADH-quinone oxidoreductase subunit G (914 aa).

The 83-residue stretch at 1 to 83 (MATIHVDGKE…GTFISIDDSE (83 aa)) folds into the 2Fe-2S ferredoxin-type domain. Positions 34, 45, 48, and 67 each coordinate [2Fe-2S] cluster. The 4Fe-4S His(Cys)3-ligated-type domain occupies 83–122 (EAKAFRESVVEWLMTNHPHDCPVCEEGGNCHLQDMTVMTG). [4Fe-4S] cluster is bound by residues His99, Cys103, Cys106, Cys112, Cys151, Cys154, Cys157, Cys201, Cys228, Cys231, Cys235, and Cys263. In terms of domain architecture, 4Fe-4S Mo/W bis-MGD-type spans 221–277 (MQFAPSICQQCSVGCNTSPGERYGELRRIENRYNGSVNHYFMCDRGRFGYGYVNLKD).

The protein belongs to the complex I 75 kDa subunit family. Composed of 13 different subunits. Subunits NuoCD, E, F, and G constitute the peripheral sector of the complex. The cofactor is [2Fe-2S] cluster. [4Fe-4S] cluster is required as a cofactor.

It catalyses the reaction a quinone + NADH + 5 H(+)(in) = a quinol + NAD(+) + 4 H(+)(out). Functionally, NDH-1 shuttles electrons from NADH, via FMN and iron-sulfur (Fe-S) centers, to quinones in the respiratory chain. The immediate electron acceptor for the enzyme in this species is believed to be ubiquinone. Couples the redox reaction to proton translocation (for every two electrons transferred, four hydrogen ions are translocated across the cytoplasmic membrane), and thus conserves the redox energy in a proton gradient. The chain is NADH-quinone oxidoreductase subunit G (nuoG) from Yersinia pestis.